The following is a 306-amino-acid chain: S-methyl-5'-thioadenosine phosphorylase (306 aa).

Residues Thr21, 63–64 (RH), and 96–97 (SA) contribute to the phosphate site. Met198 is a substrate binding site. Ser199 is a phosphate binding site. 222 to 224 (DYD) contacts substrate.

This sequence belongs to the PNP/MTAP phosphorylase family. MTAP subfamily. Homotrimer.

It is found in the cytoplasm. It localises to the nucleus. It carries out the reaction S-methyl-5'-thioadenosine + phosphate = 5-(methylsulfanyl)-alpha-D-ribose 1-phosphate + adenine. Its pathway is amino-acid biosynthesis; L-methionine biosynthesis via salvage pathway; S-methyl-5-thio-alpha-D-ribose 1-phosphate from S-methyl-5'-thioadenosine (phosphorylase route): step 1/1. In terms of biological role, catalyzes the reversible phosphorylation of S-methyl-5'-thioadenosine (MTA) to adenine and 5-methylthioribose-1-phosphate. Involved in the breakdown of MTA, a major by-product of polyamine biosynthesis. Responsible for the first step in the methionine salvage pathway after MTA has been generated from S-adenosylmethionine. Has broad substrate specificity with 6-aminopurine nucleosides as preferred substrates. The sequence is that of S-methyl-5'-thioadenosine phosphorylase from Sclerotinia sclerotiorum (strain ATCC 18683 / 1980 / Ss-1) (White mold).